Reading from the N-terminus, the 139-residue chain is Putative pre-16S rRNA nuclease (139 aa).

The protein belongs to the YqgF nuclease family.

The protein localises to the cytoplasm. In terms of biological role, could be a nuclease involved in processing of the 5'-end of pre-16S rRNA. In Streptococcus pneumoniae serotype 19F (strain G54), this protein is Putative pre-16S rRNA nuclease.